The sequence spans 697 residues: Tryptophan synthase (697 aa).

The tract at residues 1–298 (MTEQIKKTFL…AVVEPINEMY (298 aa)) is tryptophan synthase alpha chain. Catalysis depends on proton acceptor residues E50 and D61. A tryptophan synthase beta chain region spans residues 298–697 (YLPQKYGMFG…GPKIGWDLRF (400 aa)). Residue K381 is modified to N6-(pyridoxal phosphate)lysine.

It in the N-terminal section; belongs to the TrpA family. In the C-terminal section; belongs to the TrpB family. The cofactor is pyridoxal 5'-phosphate.

It carries out the reaction (1S,2R)-1-C-(indol-3-yl)glycerol 3-phosphate + L-serine = D-glyceraldehyde 3-phosphate + L-tryptophan + H2O. It participates in amino-acid biosynthesis; L-tryptophan biosynthesis; L-tryptophan from chorismate: step 5/5. This Schizosaccharomyces pombe (strain 972 / ATCC 24843) (Fission yeast) protein is Tryptophan synthase (trp2).